The primary structure comprises 807 residues: MAERVEASSVPEGENTIEEREVGAMWELEQKLDQPMDEEANKLNNMYREKGLSMLMLLRLSFQSLGIVYGDLGTSPLYVFYNTFPDGIDDSEDVIGALSLIIYSLLLIPLIKYVFIVCKANDNGQGGTLAIYSLLCRHAKVKLIPNQHRSDEDLTTYSRTVSAEGSFAAKTKKWLEGKEWRKRALLVVVLLGTCMMIGDGILTPAISVLSATGGIKVNNPKMSGDIVVLVAIVILIGLFSMQHYGTDKVGWLFAPIVLIWFLFIGATGMYNICKYDTSVLKAFSPTYIYLYFKRRGRDGWISLGGILLSITGTEALYADIAYFPLLAIQLAFTFFVFPCLLLAYCGQAAYLVIHKEHYQDAFYASIPDSVYWPMFIVATGAAIVGSQATISGTYSIVKQAVAHGCFPRVKIVHTSKKFLGQIYCPDINWILMLGCIAVTASFKKQSQIGNAYGTAVVLVMLVTTLLMVLIMLLVWHCHWILVLIFTFLSFFVELSYFSAVIFKIDEGGWVPLIIAAISLLVMSVWHYATVKKYEFEMHSKVSMSWILGLGPSLGLVRVPGIGLVYTELASGVPHIFSHFITNLPAIHSVVVFVCVKYLPVYTVPEEERFLVKRIGPKTFRMFRCVARYGYKDLHKKDDDFENKLLTKLSSFIRIETMMEPTSNSSTYSSTYSVNHTQDSTVDLIHNNNNHNHNNNMDMFSSMVDYTVSTLDTIVSAESLHNTVSFSQDNTVEEEETDELEFLKTCKESGVVHIMGNTVVKARTGSWLPKKIAIDYVYAFLAKICRANSVILHVPHETLLNVGQVFYV.

Topologically, residues 1-59 are cytoplasmic; sequence MAERVEASSVPEGENTIEEREVGAMWELEQKLDQPMDEEANKLNNMYREKGLSMLMLLR. The helical transmembrane segment at 60–80 threads the bilayer; that stretch reads LSFQSLGIVYGDLGTSPLYVF. Over 81 to 96 the chain is Extracellular; sequence YNTFPDGIDDSEDVIG. The helical transmembrane segment at 97 to 117 threads the bilayer; that stretch reads ALSLIIYSLLLIPLIKYVFIV. Residues 118 to 185 lie on the Cytoplasmic side of the membrane; the sequence is CKANDNGQGG…EGKEWRKRAL (68 aa). A helical transmembrane segment spans residues 186-206; sequence LVVVLLGTCMMIGDGILTPAI. Over 207 to 225 the chain is Extracellular; it reads SVLSATGGIKVNNPKMSGD. A helical membrane pass occupies residues 226–246; it reads IVVLVAIVILIGLFSMQHYGT. The Cytoplasmic portion of the chain corresponds to 247–248; the sequence is DK. A helical membrane pass occupies residues 249 to 269; the sequence is VGWLFAPIVLIWFLFIGATGM. Residues 270–299 are Extracellular-facing; sequence YNICKYDTSVLKAFSPTYIYLYFKRRGRDG. The helical transmembrane segment at 300-320 threads the bilayer; that stretch reads WISLGGILLSITGTEALYADI. Topologically, residues 321-322 are cytoplasmic; sequence AY. The chain crosses the membrane as a helical span at residues 323 to 343; that stretch reads FPLLAIQLAFTFFVFPCLLLA. The Extracellular portion of the chain corresponds to 344–369; it reads YCGQAAYLVIHKEHYQDAFYASIPDS. The chain crosses the membrane as a helical span at residues 370-390; sequence VYWPMFIVATGAAIVGSQATI. Over 391–417 the chain is Cytoplasmic; the sequence is SGTYSIVKQAVAHGCFPRVKIVHTSKK. Residues 418–438 traverse the membrane as a helical segment; sequence FLGQIYCPDINWILMLGCIAV. The Extracellular segment spans residues 439–454; sequence TASFKKQSQIGNAYGT. Residues 455-475 traverse the membrane as a helical segment; that stretch reads AVVLVMLVTTLLMVLIMLLVW. Over 476–481 the chain is Cytoplasmic; sequence HCHWIL. The helical transmembrane segment at 482–502 threads the bilayer; sequence VLIFTFLSFFVELSYFSAVIF. Residues 503–507 are Extracellular-facing; that stretch reads KIDEG. The chain crosses the membrane as a helical span at residues 508-528; it reads GWVPLIIAAISLLVMSVWHYA. Over 529–807 the chain is Cytoplasmic; sequence TVKKYEFEMH…LLNVGQVFYV (279 aa).

Belongs to the HAK/KUP transporter (TC 2.A.72.3) family.

It localises to the cell membrane. Putative potassium transporter. This is Potassium transporter 9 (POT9) from Arabidopsis thaliana (Mouse-ear cress).